Reading from the N-terminus, the 378-residue chain is Erythronate-4-phosphate dehydrogenase (378 aa).

Substrate is bound by residues S45 and T66. NAD(+)-binding residues include D146 and T175. The active site involves R208. NAD(+) is bound at residue D232. E237 is a catalytic residue. H254 functions as the Proton donor in the catalytic mechanism. G257 contacts NAD(+). Y258 is a substrate binding site.

It belongs to the D-isomer specific 2-hydroxyacid dehydrogenase family. PdxB subfamily. As to quaternary structure, homodimer.

Its subcellular location is the cytoplasm. The catalysed reaction is 4-phospho-D-erythronate + NAD(+) = (R)-3-hydroxy-2-oxo-4-phosphooxybutanoate + NADH + H(+). It functions in the pathway cofactor biosynthesis; pyridoxine 5'-phosphate biosynthesis; pyridoxine 5'-phosphate from D-erythrose 4-phosphate: step 2/5. Functionally, catalyzes the oxidation of erythronate-4-phosphate to 3-hydroxy-2-oxo-4-phosphonooxybutanoate. This is Erythronate-4-phosphate dehydrogenase from Escherichia fergusonii (strain ATCC 35469 / DSM 13698 / CCUG 18766 / IAM 14443 / JCM 21226 / LMG 7866 / NBRC 102419 / NCTC 12128 / CDC 0568-73).